Reading from the N-terminus, the 497-residue chain is Cytochrome P450 26A1 (497 aa).

Cys-442 contacts heme.

This sequence belongs to the cytochrome P450 family. Requires heme as cofactor.

It localises to the endoplasmic reticulum membrane. The protein localises to the microsome membrane. The enzyme catalyses all-trans-retinoate + reduced [NADPH--hemoprotein reductase] + O2 = all-trans-(4S)-hydroxyretinoate + oxidized [NADPH--hemoprotein reductase] + H2O + H(+). The catalysed reaction is all-trans-(4S)-hydroxyretinoate + reduced [NADPH--hemoprotein reductase] + O2 = all-trans-(4S,16)-dihydroxyretinoate + oxidized [NADPH--hemoprotein reductase] + H2O + H(+). It carries out the reaction all-trans-retinoate + reduced [NADPH--hemoprotein reductase] + O2 = all-trans-18-hydroxyretinoate + oxidized [NADPH--hemoprotein reductase] + H2O + H(+). A cytochrome P450 monooxygenase involved in the metabolism of retinoates (RAs), the active metabolites of vitamin A, and critical signaling molecules in animals. RAs exist as at least four different isomers: all-trans-RA (atRA), 9-cis-RA, 13-cis-RA, and 9,13-dicis-RA, where atRA is considered to be the biologically active isomer, although 9-cis-RA and 13-cis-RA also have activity. Catalyzes the hydroxylation of atRA primarily at C-4 and C-18, thereby contributing to the regulation of atRA homeostasis and signaling. Hydroxylation of atRA limits its biological activity and initiates a degradative process leading to its eventual elimination. Involved in the convertion of atRA to all-trans-4-oxo-RA. Able to metabolize other RAs such as 9-cis, 13-cis and 9,13-di-cis RA. Can oxidize all-trans-13,14-dihydroretinoate (DRA) to metabolites which could include all-trans-4-oxo-DRA, all-trans-4-hydroxy-DRA, all-trans-5,8-epoxy-DRA, and all-trans-18-hydroxy-DRA. May play a role in the oxidative metabolism of xenobiotics such as tazarotenic acid. The polypeptide is Cytochrome P450 26A1 (Mus musculus (Mouse)).